Reading from the N-terminus, the 1574-residue chain is Plexin-C1 (1574 aa).

An N-terminal signal peptide occupies residues 1-34 (MEVSRRKTPPRPPYPAAPLPLIAYLLALAAPARG). Residues 35 to 452 (ADEPVWRSEQ…AGKEVRRIPV (418 aa)) form the Sema domain. Over 35–950 (ADEPVWRSEQ…YVEQESVPST (916 aa)) the chain is Extracellular. Cys64 and Cys87 are oxidised to a cystine. N-linked (GlcNAc...) asparagine glycans are attached at residues Asn86, Asn143, and Asn149. Cys156 and Cys194 form a disulfide bridge. N-linked (GlcNAc...) asparagine glycosylation is present at Asn252. The cysteines at positions 283 and 329 are disulfide-linked. Asn386 and Asn407 each carry an N-linked (GlcNAc...) asparagine glycan. Cystine bridges form between Cys455-Cys472, Cys461-Cys506, Cys464-Cys481, and Cys475-Cys487. N-linked (GlcNAc...) asparagine glycans are attached at residues Asn694, Asn773, and Asn802. Residues 951–971 (WYFLIALPILLAIVIVVAVVV) form a helical membrane-spanning segment. Residues 972–1574 (TRYKSKELSR…FDEKKKCKWM (603 aa)) are Cytoplasmic-facing. Ser984 carries the phosphoserine modification.

Belongs to the plexin family. Monomer. Homodimer. Interacts with SEMA7A. In terms of tissue distribution, detected on dendritic cells, skin Langerhans cells and neutrophils (at protein level).

It localises to the membrane. Functionally, receptor for SEMA7A, for vaccinia virus semaphorin A39R and for herpesvirus Sema protein. Binding of semaphorins triggers cellular responses leading to the rearrangement of the cytoskeleton and to secretion of IL6 and IL8. The polypeptide is Plexin-C1 (Plxnc1) (Mus musculus (Mouse)).